The primary structure comprises 286 residues: 4-hydroxybenzoate octaprenyltransferase (286 aa).

The next 7 membrane-spanning stretches (helical) occupy residues Ile-22–Met-42, Leu-45–Ile-65, Leu-98–Ile-118, Phe-143–Ala-163, Ile-213–Gln-233, Tyr-238–Leu-255, and Asn-266–Ile-286.

Belongs to the UbiA prenyltransferase family. Mg(2+) is required as a cofactor.

Its subcellular location is the cell inner membrane. It catalyses the reaction all-trans-octaprenyl diphosphate + 4-hydroxybenzoate = 4-hydroxy-3-(all-trans-octaprenyl)benzoate + diphosphate. It functions in the pathway cofactor biosynthesis; ubiquinone biosynthesis. Catalyzes the prenylation of para-hydroxybenzoate (PHB) with an all-trans polyprenyl group. Mediates the second step in the final reaction sequence of ubiquinone-8 (UQ-8) biosynthesis, which is the condensation of the polyisoprenoid side chain with PHB, generating the first membrane-bound Q intermediate 3-octaprenyl-4-hydroxybenzoate. The polypeptide is 4-hydroxybenzoate octaprenyltransferase (Histophilus somni (strain 2336) (Haemophilus somnus)).